Here is a 115-residue protein sequence, read N- to C-terminus: MSMDELDPHVARALTLAARFQSALDGTLNQMNNGSFRATDEAETVEVTINGHQWLTGLRIEDGLLKKLGAEAVAQRVNEALHNAQAAASAYNDAAGEQLTAALSAMSRAMNEGMA.

The polypeptide is ESX-1 secretion-associated protein EspL (Mycobacterium tuberculosis (strain CDC 1551 / Oshkosh)).